The sequence spans 130 residues: Large ribosomal subunit protein eL22 (130 aa).

It belongs to the eukaryotic ribosomal protein eL22 family.

In Caenorhabditis elegans, this protein is Large ribosomal subunit protein eL22 (rpl-22).